A 149-amino-acid chain; its full sequence is Transthyretin (149 aa).

The first 20 residues, 1 to 20 (MAFHSLLLLCLAGLVFLSEA), serve as a signal peptide directing secretion. At Cys-32 the chain carries Sulfocysteine. Lys-37 is an L-thyroxine binding site. Glu-64 carries the 4-carboxyglutamate modification. Residues Glu-76 and Ser-139 each contribute to the L-thyroxine site.

This sequence belongs to the transthyretin family. Homotetramer. Dimer of dimers. In the homotetramer, subunits assemble around a central channel that can accommodate two ligand molecules. Interacts with RBP4. Sulfonation of the reactive cysteine Cys-32 enhances the stability of the native conformation of TTR, avoiding misassembly of the protein leading to amyloid formation. As to expression, highly expressed in the choroid plexus.

It is found in the secreted. Thyroid hormone-binding protein. Probably transports thyroxine from the bloodstream to the brain. The chain is Transthyretin (TTR) from Sminthopsis macroura (Stripe-faced dunnart).